The chain runs to 157 residues: Putative pre-16S rRNA nuclease (157 aa).

The protein belongs to the YqgF nuclease family.

It is found in the cytoplasm. Functionally, could be a nuclease involved in processing of the 5'-end of pre-16S rRNA. The sequence is that of Putative pre-16S rRNA nuclease from Nitrosomonas eutropha (strain DSM 101675 / C91 / Nm57).